The following is a 281-amino-acid chain: Bifunctional N-acyl-homoserine lactone acylase/prephenate dehydratase (281 aa).

The Prephenate dehydratase domain occupies 6–181 (IIAFQGRPGA…NTTRFYIASR (176 aa)). In terms of domain architecture, ACT spans 196–273 (TLLFRVNNQP…EQQEILGVYP (78 aa)). L-phenylalanine is bound by residues Ala-207, Leu-208, Asn-221, and Met-222.

As to quaternary structure, homodimer.

It carries out the reaction an N-acyl-L-homoserine lactone + H2O = L-homoserine lactone + a carboxylate. The catalysed reaction is prephenate + H(+) = 3-phenylpyruvate + CO2 + H2O. Its pathway is amino-acid biosynthesis; L-phenylalanine biosynthesis; phenylpyruvate from prephenate: step 1/1. Multifunctional enzyme that acts on N-acyl-homoserine lactones (AHLs), beta-lactam antibiotics and shows prephenate dehydratase activity. Acts as an acylase on AHL and hydrolyzes the amide bond of the acyl side-chain of AHL molecules, releasing homoserine lactone (HSL) and the fatty acid. Can use different 3-oxo-acyl homoserine lactones, such as 3-oxo-decanoyl homoserine lactone, which is the preferred substrate, 3-oxo-octanoyl homoserine lactone, 3-oxo-hexanoyl homoserine lactone and 3-oxo-dodecanoyl homoserine lactone. It can also degrade various beta-lactam antibiotics, including penicillin G, amoxicillin and ampicillin, but not cefotaxime. In addition, it can complement a phenylalanine auxotrophic E.coli mutant, which carries a kanamycin gene inserted into pheA, suggesting that GqqA can also function as a prephenate dehydratase. Involved in bacterial quorum quenching (QQ) and cellulose biofilm formation. The protein is Bifunctional N-acyl-homoserine lactone acylase/prephenate dehydratase of Komagataeibacter europaeus (Gluconacetobacter europaeus).